Here is a 328-residue protein sequence, read N- to C-terminus: Interleukin-12 subunit beta (328 aa).

The signal sequence occupies residues 1–22 (MCHQQLVISWFSLVFLASPLMA). Positions 29 to 106 (DVYVVELDWY…LSHSLLLLHK (78 aa)) constitute an Ig-like C2-type domain. An intrachain disulfide couples Cys50 to Cys90. Residues Asn125, Asn135, and Asn222 are each glycosylated (N-linked (GlcNAc...) asparagine). The Fibronectin type-III domain maps to 237–328 (PPKNLQLKPL…WSEWASVPCS (92 aa)).

The protein belongs to the IL-12B family. In terms of assembly, heterodimer with IL12A; disulfide-linked. The heterodimer is known as interleukin IL-12. Heterodimer with IL23A; disulfide-linked. The heterodimer is known as interleukin IL-23. Also secreted as a monomer. Interacts with NBR1; this interaction promotes IL-12 secretion.

It localises to the secreted. Cytokine that can act as a growth factor for activated T and NK cells, enhance the lytic activity of NK/lymphokine-activated killer cells, and stimulate the production of IFN-gamma by resting PBMC. In terms of biological role, associates with IL23A to form the IL-23 interleukin, a heterodimeric cytokine which functions in innate and adaptive immunity. IL-23 may constitute with IL-17 an acute response to infection in peripheral tissues. IL-23 binds to a heterodimeric receptor complex composed of IL12RB1 and IL23R, activates the Jak-Stat signaling cascade, stimulates memory rather than naive T-cells and promotes production of pro-inflammatory cytokines. IL-23 induces autoimmune inflammation and thus may be responsible for autoimmune inflammatory diseases and may be important for tumorigenesis. The sequence is that of Interleukin-12 subunit beta (IL12B) from Macaca mulatta (Rhesus macaque).